We begin with the raw amino-acid sequence, 311 residues long: Probable cell division protein WhiA (311 aa).

The H-T-H motif DNA-binding region spans 277–311 (TLKEVADQIPDGPISKSGVNHRFKKLHELAETLKE).

This sequence belongs to the WhiA family.

Involved in cell division and chromosome segregation. The protein is Probable cell division protein WhiA of Lactobacillus helveticus (strain DPC 4571).